The chain runs to 496 residues: MLO-like protein 15 (496 aa).

Over 1-9 the chain is Extracellular; the sequence is MAGGGTTLE. The chain crosses the membrane as a helical span at residues 10–30; the sequence is YTPTWVVALVCSVIVSISFAV. Over 31 to 59 the chain is Cytoplasmic; it reads ERLIHRAGKHFKNNDQKQLFGALQKIKEE. A helical membrane pass occupies residues 60–80; it reads LMLVGFISLLLSVGQSKIAKI. At 81–147 the chain is on the extracellular side; sequence CISKELSEKF…MSLSALHELH (67 aa). A helical transmembrane segment spans residues 148 to 168; the sequence is IFIFVLAVAHIIFCLLTIVFG. Residues 169 to 269 lie on the Cytoplasmic side of the membrane; it reads TMKIKQWKKW…KYLMRALNSD (101 aa). The chain crosses the membrane as a helical span at residues 270–290; that stretch reads FKKVVGISWYLWVFVVLFLLL. Residue asparagine 291 is a topological domain, extracellular. Residues 292–312 traverse the membrane as a helical segment; sequence IVAWHVYFWLAFIPLILLLAV. The Cytoplasmic segment spans residues 313 to 355; that stretch reads GTKLEHIITDLAHEVAEKHIAVEGDLVVRPSDDLFWFQSPRLV. Residues 356-376 form a helical membrane-spanning segment; sequence LFLIHFILFQNSFEIAYFFFI. The Extracellular portion of the chain corresponds to 377-397; that stretch reads LFQFGWDSCIMDHVKFVIPRL. The chain crosses the membrane as a helical span at residues 398–418; it reads VIGVIIQLLCSYSTLPLYALV. The Cytoplasmic segment spans residues 419–496; that stretch reads TQMGSSFKGA…KEKSEIAHHD (78 aa). A calmodulin-binding region spans residues 432 to 453; it reads EQTQEHLVGWAKMAKRGVKKGA. The segment at 454–496 is disordered; sequence TQVGTSHDATSPRPSIQLNSLLGKGSSQQNQNPKEKSEIAHHD. Polar residues predominate over residues 455-485; it reads QVGTSHDATSPRPSIQLNSLLGKGSSQQNQN. Basic and acidic residues predominate over residues 486-496; sequence PKEKSEIAHHD.

Belongs to the MLO family.

The protein resides in the membrane. Functionally, may be involved in modulation of pathogen defense and leaf cell death. Activity seems to be regulated by Ca(2+)-dependent calmodulin binding and seems not to require heterotrimeric G proteins. The chain is MLO-like protein 15 (MLO15) from Arabidopsis thaliana (Mouse-ear cress).